Reading from the N-terminus, the 473-residue chain is 1-deoxy-D-xylulose 5-phosphate reductoisomerase, chloroplastic (473 aa).

A chloroplast-targeting transit peptide spans 1–49; sequence MALKVVSFPGDLAAVSFLDSNRGGAFNQLKVDLPFQTRDRRAVSLRRTC. NADPH contacts are provided by threonine 85, glycine 86, serine 87, isoleucine 88, glycine 111, asparagine 113, and asparagine 199. Residue lysine 200 participates in 1-deoxy-D-xylulose 5-phosphate binding. Glutamate 201 is a binding site for NADPH. Aspartate 225 lines the Mn(2+) pocket. Residues serine 226, glutamate 227, serine 251, and histidine 274 each contribute to the 1-deoxy-D-xylulose 5-phosphate site. Glutamate 227 provides a ligand contact to Mn(2+). Position 280 (glycine 280) interacts with NADPH. 1-deoxy-D-xylulose 5-phosphate is bound by residues serine 287, asparagine 292, lysine 293, and glutamate 296. Glutamate 296 serves as a coordination point for Mn(2+).

This sequence belongs to the DXR family. It depends on Mn(2+) as a cofactor. Mg(2+) serves as cofactor.

It localises to the plastid. Its subcellular location is the chloroplast stroma. It carries out the reaction 2-C-methyl-D-erythritol 4-phosphate + NADP(+) = 1-deoxy-D-xylulose 5-phosphate + NADPH + H(+). Its pathway is isoprenoid biosynthesis; isopentenyl diphosphate biosynthesis via DXP pathway; isopentenyl diphosphate from 1-deoxy-D-xylulose 5-phosphate: step 1/6. Enzyme of the plastid non-mevalonate pathway for isoprenoid biosynthesis that catalyzes the NADPH-dependent rearrangement and reduction of 1-deoxy-D-xylulose-5-phosphate (DXP) to 2-C-methyl-D-erythritol 4-phosphate (MEP). Required for chloroplast development. The sequence is that of 1-deoxy-D-xylulose 5-phosphate reductoisomerase, chloroplastic (DXR) from Oryza sativa subsp. japonica (Rice).